Here is a 114-residue protein sequence, read N- to C-terminus: Flagellar hook-basal body complex protein FliE (114 aa).

The protein belongs to the FliE family.

The protein resides in the bacterial flagellum basal body. The protein is Flagellar hook-basal body complex protein FliE of Desulfitobacterium hafniense (strain DSM 10664 / DCB-2).